The following is a 1532-amino-acid chain: MALSSFCSSDGSDPLWDWNVTWHTSNPDFTKCFQNTVLTWVPCFYLWSCFPLYFLYLSRHDRGYIQMTHLNKAKTALGFFLWIICWADLFYSFWERSQGMLLAPVLLVSPTLLGITMLLATFLIQFERRKGVQSSGIMLTFWLVALLCALAILRSKIISALKKDAQVDMFRDSAFYLYFTLVFIQLVLSCFSDSSPLFSETVRDPNPCPESSASFLSRITFWWITGMMVQGYRQPLKSSDLWSLNKEDTSEEVVPVLVNNWKKECVKSRKQPVRIVYAPPKDPTKPKGSSQLDVNEEVEALIVKSSHKDRDPSLFKVLYKTFGPYFLMSFLYKALHDLMMFAGPEILELIINFVNDREAPDWQGYLYTALLFVSACLQTLALHQYFHICFVTGMRIKTAVVGAVYRKALVITNSARKSSTVGEIVNLMSVDAQRFMDLATYINMIWSAPLQVTLALYFLWLNLGPSVLAGVAVMILMVPFNAVMAMKTKTYQVAHMKSKDNRIKLMNEILNGIKVLKLYAWELAFQDKVMNIRQEELKVLKKSAYLAAVGTFTWVCTPFLVALSTFAVFVTVDEKNILDAKKAFVSLALFNILRFPLNILPMVISSIVQASVSLKRLRIFLSHEELEPDSIERWSIKDGGGMNSITVKNATFTWARDEPPTLNGITFAIPDGALVAVVGQVGCGKSSLLSALLAEMDKVEGHVTLKGSVAYVPQQAWIQNDSLRENILFGRPLQEHCYKAVMEACALLPDLEILPSGDLTEIGEKGVNLSGGQKQRVSLARAVYCNSDIYLLDDPLSAVDAHVGKHIFEKVVGPMGLLKNKTRILVTHGISYLPQVDVIIVMSGGKISEMGSYQELLDRDGAFAEFVRTYANTEQDLASEDDSKNGVSGLGKESKPVENGILVTDAVGKPLQRHLSNSSSHSVVTNQQHSSTAELQKSGVKEETWKLMEADKAQTGQVKLSVYWNYMKAIGLCISFLSIFLFLCNHVSALASNYWLSLWTDDRPAVNGTQENRNFRLSVYGALGILQGVAVFGYSMAVSIGGIFASRRLHLDLLQNVLRSPMSFFERTPSGNLVNRFSKELDTVDSMIPQVIKMFMGSLFSVIGAVIIILLATPIAAVIIPPLGLVYFFVQRFYVASSRQLKRLESVSRSPVYSHFNETLLGVSVIRAFEEQERFIRQSDLKVDENQKAYYPSIVANRWLAVRLECVGNCIVLFAALFAVISRHSLSAGLVGLSVSYSLQITAYLNWLVRMSSEMETNIVAVERLKEYSETEKEASWQIQETAPPSTWPHSGRVEFRDYCLRYREDLDLVLKHINVTIEGGEKVGIVGRTGAGKSSLTLGLFRINESAEGEIIIDGINIAKIGLHNLRFKITIIPQDPVLFSGSLRMNLDPFSQYSDEEVWMALELAHLKGFVSALPDKLNHECAEGGENLSVGQRQLVCLARALLRKTKILVLDEATAAVDLETDDLIQSTIRTQFEDSTVLTIAHRLNTIMDYTRVIVLDKGEIRECGAPSELLQQRGVFYSMAKDAGLV.

The Extracellular portion of the chain corresponds to 1-33; that stretch reads MALSSFCSSDGSDPLWDWNVTWHTSNPDFTKCF. N19 is a glycosylation site (N-linked (GlcNAc...) asparagine). The helical transmembrane segment at 34–54 threads the bilayer; that stretch reads QNTVLTWVPCFYLWSCFPLYF. At 55–74 the chain is on the cytoplasmic side; it reads LYLSRHDRGYIQMTHLNKAK. The helical transmembrane segment at 75–95 threads the bilayer; that stretch reads TALGFFLWIICWADLFYSFWE. Over 96–100 the chain is Extracellular; the sequence is RSQGM. Residues 101-121 form a helical membrane-spanning segment; the sequence is LLAPVLLVSPTLLGITMLLAT. Residues 122–133 lie on the Cytoplasmic side of the membrane; it reads FLIQFERRKGVQ. A helical membrane pass occupies residues 134 to 154; it reads SSGIMLTFWLVALLCALAILR. Residues 155–172 are Extracellular-facing; it reads SKIISALKKDAQVDMFRD. Residues 173–193 traverse the membrane as a helical segment; sequence SAFYLYFTLVFIQLVLSCFSD. Residues 194 to 317 are Cytoplasmic-facing; the sequence is SSPLFSETVR…KDRDPSLFKV (124 aa). At Y277 the chain carries Phosphotyrosine. S290 bears the Phosphoserine mark. Residues 318–338 form a helical membrane-spanning segment; it reads LYKTFGPYFLMSFLYKALHDL. In terms of domain architecture, ABC transmembrane type-1 1 spans 326 to 609; the sequence is FLMSFLYKAL…LPMVISSIVQ (284 aa). The Extracellular portion of the chain corresponds to 339 to 364; the sequence is MMFAGPEILELIINFVNDREAPDWQG. A helical transmembrane segment spans residues 365–385; the sequence is YLYTALLFVSACLQTLALHQY. The Cytoplasmic segment spans residues 386–441; sequence FHICFVTGMRIKTAVVGAVYRKALVITNSARKSSTVGEIVNLMSVDAQRFMDLATY. The chain crosses the membrane as a helical span at residues 442–462; that stretch reads INMIWSAPLQVTLALYFLWLN. Topologically, residues 463 to 465 are extracellular; the sequence is LGP. A helical transmembrane segment spans residues 466-486; sequence SVLAGVAVMILMVPFNAVMAM. At 487-548 the chain is on the cytoplasmic side; sequence KTKTYQVAHM…VLKKSAYLAA (62 aa). An N6-succinyllysine modification is found at K504. The helical transmembrane segment at 549-569 threads the bilayer; it reads VGTFTWVCTPFLVALSTFAVF. Over 570–591 the chain is Extracellular; sequence VTVDEKNILDAKKAFVSLALFN. A helical membrane pass occupies residues 592–612; sequence ILRFPLNILPMVISSIVQASV. Topologically, residues 613-967 are cytoplasmic; that stretch reads SLKRLRIFLS…VKLSVYWNYM (355 aa). One can recognise an ABC transporter 1 domain in the interval 645–869; that stretch reads ITVKNATFTW…DGAFAEFVRT (225 aa). Residue 679–686 participates in ATP binding; it reads GQVGCGKS. Residues S879, S883, S916, and S931 each carry the phosphoserine modification. A helical transmembrane segment spans residues 968-988; that stretch reads KAIGLCISFLSIFLFLCNHVS. One can recognise an ABC transmembrane type-1 2 domain in the interval 975-1257; that stretch reads SFLSIFLFLC…LVRMSSEMET (283 aa). The Extracellular segment spans residues 989–1026; the sequence is ALASNYWLSLWTDDRPAVNGTQENRNFRLSVYGALGIL. A helical membrane pass occupies residues 1027-1047; that stretch reads QGVAVFGYSMAVSIGGIFASR. Residues 1048–1090 are Cytoplasmic-facing; it reads RLHLDLLQNVLRSPMSFFERTPSGNLVNRFSKELDTVDSMIPQ. Residues 1091 to 1111 traverse the membrane as a helical segment; that stretch reads VIKMFMGSLFSVIGAVIIILL. A1112 is a topological domain (extracellular). The chain crosses the membrane as a helical span at residues 1113 to 1133; the sequence is TPIAAVIIPPLGLVYFFVQRF. Over 1134–1204 the chain is Cytoplasmic; that stretch reads YVASSRQLKR…VANRWLAVRL (71 aa). A helical membrane pass occupies residues 1205–1225; the sequence is ECVGNCIVLFAALFAVISRHS. The Extracellular segment spans residues 1226-1227; sequence LS. A helical transmembrane segment spans residues 1228 to 1248; that stretch reads AGLVGLSVSYSLQITAYLNWL. At 1249–1532 the chain is on the cytoplasmic side; that stretch reads VRMSSEMETN…YSMAKDAGLV (284 aa). In terms of domain architecture, ABC transporter 2 spans 1294 to 1528; the sequence is VEFRDYCLRY…RGVFYSMAKD (235 aa). 1328-1335 is a binding site for ATP; sequence GRTGAGKS.

Belongs to the ABC transporter superfamily. ABCC family. Conjugate transporter (TC 3.A.1.208) subfamily. In terms of processing, glycosylated. As to expression, skeletal muscle, brain, heart, spleen, lung and kidney.

The protein resides in the cell membrane. It is found in the basolateral cell membrane. The enzyme catalyses ATP + H2O + xenobioticSide 1 = ADP + phosphate + xenobioticSide 2.. It catalyses the reaction an S-substituted glutathione(in) + ATP + H2O = an S-substituted glutathione(out) + ADP + phosphate + H(+). It carries out the reaction sphing-4-enine 1-phosphate(in) + ATP + H2O = sphing-4-enine 1-phosphate(out) + ADP + phosphate + H(+). The catalysed reaction is leukotriene C4(in) + ATP + H2O = leukotriene C4(out) + ADP + phosphate + H(+). The enzyme catalyses 17beta-estradiol 17-O-(beta-D-glucuronate)(in) + ATP + H2O = 17beta-estradiol 17-O-(beta-D-glucuronate)(out) + ADP + phosphate + H(+). It catalyses the reaction daunorubicin(in) + ATP + H2O = daunorubicin(out) + ADP + phosphate + H(+). It carries out the reaction vincristine(in) + ATP + H2O = vincristine(out) + ADP + phosphate + H(+). The catalysed reaction is 2',3'-cGAMP(in) + ATP + H2O = 2',3'-cGAMP(out) + ADP + phosphate + H(+). The enzyme catalyses S-[(2E,6E,10E)-geranylgeranyl]-L-glutathione(in) + ATP + H2O = S-[(2E,6E,10E)-geranylgeranyl]-L-glutathione(out) + ADP + phosphate + H(+). It catalyses the reaction prostaglandin A2-S-(R)-glutathione(in) + ATP + H2O = prostaglandin A2-S-(R)-glutathione(out) + ADP + phosphate + H(+). It carries out the reaction prostaglandin A2-S-(S)-glutathione(in) + ATP + H2O = prostaglandin A2-S-(S)-glutathione(out) + ADP + phosphate + H(+). With respect to regulation, MK 571 inhibits sphingosine 1-phosphate and leukotriene C4 export. Functionally, mediates export of organic anions and drugs from the cytoplasm. Mediates ATP-dependent transport of glutathione and glutathione conjugates, leukotriene C4, estradiol-17-beta-o-glucuronide, methotrexate, antiviral drugs and other xenobiotics. Confers resistance to anticancer drugs by decreasing accumulation of drug in cells, and by mediating ATP- and GSH-dependent drug export. Hydrolyzes ATP with low efficiency. Catalyzes the export of sphingosine 1-phosphate from mast cells independently of their degranulation. Participates in inflammatory response by allowing export of leukotriene C4 from leukotriene C4-synthesizing cells. Exports S-geranylgeranyl-glutathione (GGG) in lymphoid cells and stromal compartments of lymphoid organs. ABCC1 (via extracellular transport) with GGT5 (via GGG catabolism) establish GGG gradients within lymphoid tissues to position P2RY8-positive lymphocytes at germinal centers in lymphoid follicles and restrict their chemotactic transmigration from blood vessels to the bone marrow parenchyma. Mediates basolateral export of GSH-conjugated R- and S-prostaglandin A2 diastereomers in polarized epithelial cells. The chain is Multidrug resistance-associated protein 1 from Rattus norvegicus (Rat).